The chain runs to 384 residues: PqqA peptide cyclase (384 aa).

The Radical SAM core domain maps to 5–220 (VGLPLWLLAE…TNEYREKLKA (216 aa)). Positions 19, 23, and 26 each coordinate [4Fe-4S] cluster.

This sequence belongs to the radical SAM superfamily. PqqE family. In terms of assembly, interacts with PqqD. The interaction is necessary for activity of PqqE. The cofactor is [4Fe-4S] cluster.

It carries out the reaction [PQQ precursor protein] + S-adenosyl-L-methionine = E-Y cross-linked-[PQQ precursor protein] + 5'-deoxyadenosine + L-methionine + H(+). Its pathway is cofactor biosynthesis; pyrroloquinoline quinone biosynthesis. Catalyzes the cross-linking of a glutamate residue and a tyrosine residue in the PqqA protein as part of the biosynthesis of pyrroloquinoline quinone (PQQ). The protein is PqqA peptide cyclase of Acinetobacter baumannii (strain SDF).